The chain runs to 502 residues: Probable mRNA-splicing protein ubp10 (502 aa).

The UBP-type; degenerate zinc-finger motif lies at 56–153; the sequence is SQNLYLDTIN…YVMRPTFTKL (98 aa). Zn(2+) is bound by residues Cys-89, Cys-92, His-108, and His-114. In terms of domain architecture, USP spans 178 to 501; that stretch reads VGMNNIKNND…ESFIQLWERS (324 aa).

It belongs to the peptidase C19 family.

Its subcellular location is the nucleus. Its function is as follows. May play a role in mRNA splicing. It is unsure if the protein really exhibits hydrolase activity. Could be a competitor of ubiquitin C-terminal hydrolases (UCHs). The protein is Probable mRNA-splicing protein ubp10 (ubp10) of Schizosaccharomyces pombe (strain 972 / ATCC 24843) (Fission yeast).